A 240-amino-acid polypeptide reads, in one-letter code: Eukaryotic translation initiation factor 4E-2 (240 aa).

The tract at residues 1–29 is disordered; the sequence is MVVMDSPVSGRMADQNIDPNTTTSPSPIE. Positions 17–26 are enriched in polar residues; that stretch reads IDPNTTTSPS. EIF4G-binding regions lie at residues 65 to 68 and 75 to 111; these read HCFQ and FDNP…NNIH. MRNA is bound by residues 83–88, lysine 115, and 133–134; these read NQVIWG and WE. Cysteine 138 and cysteine 176 are joined by a disulfide. The tract at residues 159-168 is EIF4G-binding; the sequence is NTLLALVGEQ. MRNA is bound by residues 183–188 and 228–232; these read RTRGDR and KTLDR.

This sequence belongs to the eukaryotic initiation factor 4E family. In terms of assembly, EIF4F is a multi-subunit complex, the composition of which varies with external and internal environmental conditions. It is composed of at least EIF4A, EIF4E and EIF4G. EIF4E is also known to interact with other partners. In higher plants two isoforms of EIF4F have been identified, named isoform EIF4F and isoform EIF(iso)4F. Isoform EIF4F has subunits p220 and p26, whereas isoform EIF(iso)4F has subunits p82 and p28. According to the redox status, the Cys-138-Cys-176 disulfide bridge may have a role in regulating protein function by affecting its ability to bind capped mRNA.

The protein localises to the nucleus. It is found in the cytoplasm. Its function is as follows. Component of the protein complex eIF4F, which is involved in the recognition of the mRNA cap, ATP-dependent unwinding of 5'-terminal secondary structure and recruitment of mRNA to the ribosome. Recognizes and binds the 7-methylguanosine-containing mRNA cap during an early step in the initiation of protein synthesis and facilitates ribosome binding by inducing the unwinding of the mRNAs secondary structures. The chain is Eukaryotic translation initiation factor 4E-2 from Arabidopsis thaliana (Mouse-ear cress).